The primary structure comprises 285 residues: Ribosomal RNA small subunit methyltransferase A (285 aa).

Residues Asn30, Leu32, Gly57, Glu78, Asp101, and Asn121 each contribute to the S-adenosyl-L-methionine site.

This sequence belongs to the class I-like SAM-binding methyltransferase superfamily. rRNA adenine N(6)-methyltransferase family. RsmA subfamily.

The protein resides in the cytoplasm. It carries out the reaction adenosine(1518)/adenosine(1519) in 16S rRNA + 4 S-adenosyl-L-methionine = N(6)-dimethyladenosine(1518)/N(6)-dimethyladenosine(1519) in 16S rRNA + 4 S-adenosyl-L-homocysteine + 4 H(+). In terms of biological role, specifically dimethylates two adjacent adenosines (A1518 and A1519) in the loop of a conserved hairpin near the 3'-end of 16S rRNA in the 30S particle. May play a critical role in biogenesis of 30S subunits. The polypeptide is Ribosomal RNA small subunit methyltransferase A (Treponema pallidum (strain Nichols)).